The primary structure comprises 428 residues: Succinyl-CoA--L-malate CoA-transferase alpha subunit (428 aa).

The tract at residues 1–31 is disordered; sequence MPPTGEEPSGHAESKPPASDPMSTPGTGQEQ. The span at 21-31 shows a compositional bias: polar residues; the sequence is PMSTPGTGQEQ. Residue D200 is the Nucleophile of the active site.

It belongs to the CoA-transferase III family. As to quaternary structure, forms a large complex composed of six heterodimers (alpha, beta).

It catalyses the reaction succinyl-CoA + (S)-malate = (S)-malyl-CoA + succinate. It carries out the reaction (3S)-citramalate + succinyl-CoA = (3S)-citramalyl-CoA + succinate. Involved in the 3-hydroxypropionate cycle used for autotrophic carbon dioxide fixation. Catalyzes the transfer of CoA moiety from succinyl-CoA to L-malate to yield L-malyl-CoA. It is highly specific for succinyl-CoA as the CoA donor, however it can accept L-citramalate instead of L-malate as the CoA acceptor. This Chloroflexus aurantiacus protein is Succinyl-CoA--L-malate CoA-transferase alpha subunit (smtA).